A 620-amino-acid chain; its full sequence is Kelch-like protein 32 (620 aa).

The BTB domain maps to 42–109 (CDITLIAEEQ…AYTGQILLEP (68 aa)). Kelch repeat units lie at residues 290–346 (TLYI…VMGD), 347–398 (FLFV…AMEE), 399–446 (YLYA…VADG), 447–494 (LLWI…AVQR), 496–547 (LYVL…VHNG), and 549–599 (IYLV…FLPA).

This is Kelch-like protein 32 (KLHL32) from Homo sapiens (Human).